The sequence spans 455 residues: Phosphoglucosamine mutase (455 aa).

The active-site Phosphoserine intermediate is the Ser102. Residues Ser102, Asp241, Asp243, and Asp245 each contribute to the Mg(2+) site. Phosphoserine is present on Ser102.

It belongs to the phosphohexose mutase family. The cofactor is Mg(2+). Post-translationally, activated by phosphorylation.

The enzyme catalyses alpha-D-glucosamine 1-phosphate = D-glucosamine 6-phosphate. In terms of biological role, catalyzes the conversion of glucosamine-6-phosphate to glucosamine-1-phosphate. In Legionella pneumophila (strain Corby), this protein is Phosphoglucosamine mutase.